A 239-amino-acid polypeptide reads, in one-letter code: 1-(5-phosphoribosyl)-5-[(5-phosphoribosylamino)methylideneamino] imidazole-4-carboxamide isomerase (239 aa).

Catalysis depends on D8, which acts as the Proton acceptor. Catalysis depends on D129, which acts as the Proton donor.

It belongs to the HisA/HisF family.

It is found in the cytoplasm. The catalysed reaction is 1-(5-phospho-beta-D-ribosyl)-5-[(5-phospho-beta-D-ribosylamino)methylideneamino]imidazole-4-carboxamide = 5-[(5-phospho-1-deoxy-D-ribulos-1-ylimino)methylamino]-1-(5-phospho-beta-D-ribosyl)imidazole-4-carboxamide. It participates in amino-acid biosynthesis; L-histidine biosynthesis; L-histidine from 5-phospho-alpha-D-ribose 1-diphosphate: step 4/9. The chain is 1-(5-phosphoribosyl)-5-[(5-phosphoribosylamino)methylideneamino] imidazole-4-carboxamide isomerase from Bacillus cereus (strain G9842).